Reading from the N-terminus, the 209-residue chain is Uracil phosphoribosyltransferase (209 aa).

Residues arginine 79, arginine 104, and 131 to 139 (DPMLATGGS) each bind 5-phospho-alpha-D-ribose 1-diphosphate. Uracil-binding positions include isoleucine 194 and 199–201 (GDA). A 5-phospho-alpha-D-ribose 1-diphosphate-binding site is contributed by aspartate 200.

It belongs to the UPRTase family. It depends on Mg(2+) as a cofactor.

It carries out the reaction UMP + diphosphate = 5-phospho-alpha-D-ribose 1-diphosphate + uracil. Its pathway is pyrimidine metabolism; UMP biosynthesis via salvage pathway; UMP from uracil: step 1/1. With respect to regulation, allosterically activated by GTP. Functionally, catalyzes the conversion of uracil and 5-phospho-alpha-D-ribose 1-diphosphate (PRPP) to UMP and diphosphate. The chain is Uracil phosphoribosyltransferase from Clostridioides difficile (strain 630) (Peptoclostridium difficile).